The sequence spans 128 residues: Probable 4-amino-4-deoxy-L-arabinose-phosphoundecaprenol flippase subunit ArnF (128 aa).

Residues Met-1 to Gly-2 lie on the Cytoplasmic side of the membrane. A helical transmembrane segment spans residues Leu-3 to Ala-23. The Periplasmic portion of the chain corresponds to Ala-24–Asp-35. Residues Phe-36 to Gly-56 form a helical membrane-spanning segment. Residues Tyr-57 to Ala-76 are Cytoplasmic-facing. A helical transmembrane segment spans residues Tyr-77–Trp-97. At Glu-98 to Thr-100 the chain is on the periplasmic side. The chain crosses the membrane as a helical span at residues Phe-101–Leu-121. The Cytoplasmic segment spans residues Pro-122–Tyr-128.

This sequence belongs to the ArnF family. Heterodimer of ArnE and ArnF.

The protein localises to the cell inner membrane. It functions in the pathway bacterial outer membrane biogenesis; lipopolysaccharide biosynthesis. Its function is as follows. Translocates 4-amino-4-deoxy-L-arabinose-phosphoundecaprenol (alpha-L-Ara4N-phosphoundecaprenol) from the cytoplasmic to the periplasmic side of the inner membrane. This is Probable 4-amino-4-deoxy-L-arabinose-phosphoundecaprenol flippase subunit ArnF from Escherichia coli O45:K1 (strain S88 / ExPEC).